The sequence spans 130 residues: Small ribosomal subunit protein uS11 (130 aa).

Belongs to the universal ribosomal protein uS11 family. Part of the 30S ribosomal subunit. Interacts with proteins S7 and S18. Binds to IF-3.

Its function is as follows. Located on the platform of the 30S subunit, it bridges several disparate RNA helices of the 16S rRNA. Forms part of the Shine-Dalgarno cleft in the 70S ribosome. This Pseudoalteromonas atlantica (strain T6c / ATCC BAA-1087) protein is Small ribosomal subunit protein uS11.